A 260-amino-acid polypeptide reads, in one-letter code: Thiamine thiazole synthase (260 aa).

Residues A36, 55-56, G63, and 154-156 each bind NAD(+); these read EQ and HVD. D156 and H171 together coordinate Fe cation. M224 serves as a coordination point for NAD(+). R234 lines the glycine pocket.

It belongs to the THI4 family. As to quaternary structure, homooctamer; tetramer of dimers. The cofactor is Fe(2+).

It carries out the reaction hydrogen sulfide + glycine + NAD(+) = ADP-5-ethyl-4-methylthiazole-2-carboxylate + nicotinamide + 3 H2O + H(+). The protein operates within cofactor biosynthesis; thiamine diphosphate biosynthesis. Functionally, involved in the biosynthesis of the thiazole moiety of thiamine. Catalyzes the conversion of NAD and glycine to adenosine diphosphate 5-(2-hydroxyethyl)-4-methylthiazole-2-carboxylate (ADT), an adenylated thiazole intermediate, using free sulfide as a source of sulfur. This chain is Thiamine thiazole synthase, found in Methanosarcina barkeri (strain Fusaro / DSM 804).